The sequence spans 123 residues: Venom protein 29 (123 aa).

The signal sequence occupies residues 1-18 (MNKLFLFTLLVTLWSVKG).

In terms of processing, contains 3 disulfide bonds. In terms of tissue distribution, expressed by the venom gland.

It is found in the secreted. The polypeptide is Venom protein 29 (Lychas mucronatus (Chinese swimming scorpion)).